We begin with the raw amino-acid sequence, 701 residues long: Triadin (701 aa).

Residues 1 to 28 (MTEITAEGNASTTTTVIDSKNGSVPKSP) are disordered. Over 1–47 (MTEITAEGNASTTTTVIDSKNGSVPKSPGKVLKRTVTEDIVTTFSSP) the chain is Cytoplasmic. Residues 8 to 24 (GNASTTTTVIDSKNGSV) are compositionally biased toward polar residues. Residues 48 to 68 (AAWLLVIALIITWSAVAVVMF) form a helical membrane-spanning segment. Residues 69-701 (DLVDYKNFSA…SSPGQKQQGQ (633 aa)) are Lumenal-facing. N-linked (GlcNAc...) asparagine glycosylation is present at Asn-75. Acidic residues predominate over residues 117 to 130 (DGDEDDDDGDEDTD). Disordered regions lie at residues 117-256 (DGDE…KHEQ), 273-654 (GDLR…TKRQ), and 676-701 (FPVT…QQGQ). 6 stretches are compositionally biased toward basic and acidic residues: residues 131–256 (KGEI…KHEQ), 303–351 (EGKE…KAPE), 365–385 (AKKD…EEHP), 391–426 (EKKE…KEET), 437–485 (GKKE…EVKP), and 492–643 (VKKE…KAKE). N-linked (GlcNAc...) asparagine glycosylation occurs at Asn-617. The span at 684 to 701 (PGESSGQPSSPGQKQQGQ) shows a compositional bias: low complexity.

Homooligomer of variable subunit number; disulfide-linked. Interacts with CASQ1 and RYR1 in skeletal muscle. Interacts with CASQ2. Post-translationally, phosphorylated by CaMK2. In terms of processing, N-glycosylated. Detected in heart (at protein level). Skeletal and cardiac muscle.

The protein resides in the sarcoplasmic reticulum membrane. In terms of biological role, contributes to the regulation of lumenal Ca2+ release via the sarcoplasmic reticulum calcium release channels RYR1 and RYR2, a key step in triggering skeletal and heart muscle contraction. Required for normal organization of the triad junction, where T-tubules and the sarcoplasmic reticulum terminal cisternae are in close contact. Required for normal skeletal muscle strength. Plays a role in excitation-contraction coupling in the heart and in regulating the rate of heart beats. The protein is Triadin (TRDN) of Canis lupus familiaris (Dog).